The following is a 118-amino-acid chain: UPF0295 protein BA_0538/GBAA_0538/BAS0506 (118 aa).

2 consecutive transmembrane segments (helical) span residues I12–F32 and F43–M63.

Belongs to the UPF0295 family.

The protein localises to the cell membrane. This chain is UPF0295 protein BA_0538/GBAA_0538/BAS0506, found in Bacillus anthracis.